We begin with the raw amino-acid sequence, 141 residues long: uncharacterized protein (141 aa).

This is an uncharacterized protein from Human cytomegalovirus (strain AD169) (HHV-5).